Here is a 382-residue protein sequence, read N- to C-terminus: UDP-4-amino-4-deoxy-L-arabinose--oxoglutarate aminotransferase (382 aa).

N6-(pyridoxal phosphate)lysine is present on lysine 183.

Belongs to the DegT/DnrJ/EryC1 family. ArnB subfamily. As to quaternary structure, homodimer. The cofactor is pyridoxal 5'-phosphate.

It catalyses the reaction UDP-4-amino-4-deoxy-beta-L-arabinose + 2-oxoglutarate = UDP-beta-L-threo-pentopyranos-4-ulose + L-glutamate. It participates in nucleotide-sugar biosynthesis; UDP-4-deoxy-4-formamido-beta-L-arabinose biosynthesis; UDP-4-deoxy-4-formamido-beta-L-arabinose from UDP-alpha-D-glucuronate: step 2/3. It functions in the pathway bacterial outer membrane biogenesis; lipopolysaccharide biosynthesis. Catalyzes the conversion of UDP-4-keto-arabinose (UDP-Ara4O) to UDP-4-amino-4-deoxy-L-arabinose (UDP-L-Ara4N). The modified arabinose is attached to lipid A and is required for resistance to polymyxin and cationic antimicrobial peptides. The sequence is that of UDP-4-amino-4-deoxy-L-arabinose--oxoglutarate aminotransferase from Pseudomonas aeruginosa (strain LESB58).